A 217-amino-acid chain; its full sequence is MNQTLLSDFGTPVERVERAIDALRNGRGVMVLDDESRENEGDMVFAAEAMTLEQMALTIRHGSGIVCLCITDERRQQLDLPMMVTHNSSQFQTAFTVTIEAAEGVTTGVSAADRLTTIRKAIADNAKPADLNRPGHVFPLRGQPGGVLSRRGHTEASIDLATLAGYKPAGVLCELTNDDGSMAHAPEVIAFAKLHDMPVVTIDDLAAYLQSRAKKAS.

Residues 37–38, Asp42, 150–154, and Glu174 contribute to the D-ribulose 5-phosphate site; these read RE and RRGHT. Mg(2+) is bound at residue Glu38. Residue His153 coordinates Mg(2+).

Belongs to the DHBP synthase family. In terms of assembly, homodimer. Mg(2+) serves as cofactor. The cofactor is Mn(2+).

The enzyme catalyses D-ribulose 5-phosphate = (2S)-2-hydroxy-3-oxobutyl phosphate + formate + H(+). It participates in cofactor biosynthesis; riboflavin biosynthesis; 2-hydroxy-3-oxobutyl phosphate from D-ribulose 5-phosphate: step 1/1. Catalyzes the conversion of D-ribulose 5-phosphate to formate and 3,4-dihydroxy-2-butanone 4-phosphate. The chain is 3,4-dihydroxy-2-butanone 4-phosphate synthase from Yersinia pseudotuberculosis serotype O:1b (strain IP 31758).